The sequence spans 361 residues: Epoxyqueuosine reductase (361 aa).

Aspartate 147 serves as the catalytic Proton donor. Residues 193-222 form the 4Fe-4S ferredoxin-type domain; it reads VDPAMDSEHCGRCSACLDICPTAAFVGPYR. [4Fe-4S] cluster is bound by residues cysteine 202, cysteine 205, cysteine 208, cysteine 212, cysteine 228, cysteine 255, cysteine 258, and cysteine 262.

Belongs to the QueG family. In terms of assembly, monomer. The cofactor is cob(II)alamin. [4Fe-4S] cluster is required as a cofactor.

It localises to the cytoplasm. The catalysed reaction is epoxyqueuosine(34) in tRNA + AH2 = queuosine(34) in tRNA + A + H2O. It participates in tRNA modification; tRNA-queuosine biosynthesis. Catalyzes the conversion of epoxyqueuosine (oQ) to queuosine (Q), which is a hypermodified base found in the wobble positions of tRNA(Asp), tRNA(Asn), tRNA(His) and tRNA(Tyr). The chain is Epoxyqueuosine reductase from Pseudomonas aeruginosa (strain ATCC 15692 / DSM 22644 / CIP 104116 / JCM 14847 / LMG 12228 / 1C / PRS 101 / PAO1).